Consider the following 20-residue polypeptide: Putative antimicrobial protein 2 (20 aa).

Positions 1–20 are disordered; it reads DLPECCSATELELDSGKQTS.

Its function is as follows. May have antimicrobial activity. The chain is Putative antimicrobial protein 2 from Cenchritis muricatus (Beaded periwinkle).